The primary structure comprises 1108 residues: Retinal guanylyl cyclase 2 (1108 aa).

The signal sequence occupies residues 1-50 (MFLGLGRFSRLVLWFAAFRKLLGHHGLASAKFLWCLCLLSVMSLPQQVWT). Over 51-467 (LPYKIGVVGP…KICHGGIDPA (417 aa)) the chain is Extracellular. Residues cysteine 104 and cysteine 132 are joined by a disulfide bond. Residues 468–490 (FAMMVCLTLLIALLSINGFAYFI) traverse the membrane as a helical segment. The Cytoplasmic segment spans residues 491-1108 (RRRINKIQLI…AERQLVRNKP (618 aa)). Positions 532 to 812 (FQITSEVQSG…DEIFNQFKTF (281 aa)) constitute a Protein kinase domain. The region spanning 884 to 1014 (TLYFSDIVGF…DTVNTASRME (131 aa)) is the Guanylate cyclase domain.

The protein belongs to the adenylyl cyclase class-4/guanylyl cyclase family. Homodimer. Interacts with RD3; promotes the exit of GUCY2F from the endoplasmic reticulum and its trafficking to the photoreceptor outer segments. In terms of processing, there are 9 conserved cysteine residues in sensory guanylate cyclases, 6 in the extracellular domain, which may be involved in intra- or interchain disulfide bonds. In terms of tissue distribution, retina. Localized exclusively in the outer nuclear layer and inner segments of the rod and cone photoreceptor cells.

It is found in the photoreceptor outer segment membrane. The catalysed reaction is GTP = 3',5'-cyclic GMP + diphosphate. Its activity is regulated as follows. Activated by GUCA1B when free calcium ions concentration is low, and inhibited by GUCA1B when free calcium ions concentration is high. Inhibited by RD3. Responsible for the synthesis of cyclic GMP (cGMP) in rods and cones of photoreceptors. Plays an essential role in phototransduction, by mediating cGMP replenishment. May also participate in the trafficking of membrane-asociated proteins to the photoreceptor outer segment membrane. The polypeptide is Retinal guanylyl cyclase 2 (GUCY2F) (Homo sapiens (Human)).